Consider the following 521-residue polypeptide: Glutamate--tRNA ligase (521 aa).

A 'HIGH' region motif is present at residues 30-40 (PSPTGYLHVGG). The 'KMSKS' region signature appears at 277-281 (KLSKR). K280 provides a ligand contact to ATP.

It belongs to the class-I aminoacyl-tRNA synthetase family. Glutamate--tRNA ligase type 1 subfamily. Monomer.

The protein localises to the cytoplasm. It catalyses the reaction tRNA(Glu) + L-glutamate + ATP = L-glutamyl-tRNA(Glu) + AMP + diphosphate. Functionally, catalyzes the attachment of glutamate to tRNA(Glu) in a two-step reaction: glutamate is first activated by ATP to form Glu-AMP and then transferred to the acceptor end of tRNA(Glu). The chain is Glutamate--tRNA ligase from Chlorobium phaeovibrioides (strain DSM 265 / 1930) (Prosthecochloris vibrioformis (strain DSM 265)).